The primary structure comprises 327 residues: Probable protein phosphatase 2C 59 (327 aa).

Residues 1–24 (MREVLLLGSLVVLALLSLFPCCSC) form the signal peptide. A PPM-type phosphatase domain is found at 64-310 (SYGYASSPGK…DNITCLVVRF (247 aa)). 4 residues coordinate Mn(2+): aspartate 100, glycine 101, aspartate 262, and aspartate 301.

It belongs to the PP2C family. The cofactor is Mg(2+). Mn(2+) is required as a cofactor.

It carries out the reaction O-phospho-L-seryl-[protein] + H2O = L-seryl-[protein] + phosphate. The catalysed reaction is O-phospho-L-threonyl-[protein] + H2O = L-threonyl-[protein] + phosphate. This chain is Probable protein phosphatase 2C 59, found in Oryza sativa subsp. japonica (Rice).